We begin with the raw amino-acid sequence, 718 residues long: MCASVKYNIRGPALIPRMKTKHRIYYITLFSIVLLGLIATGMFQFWPHSIESSNDWNVEKRSIRDVPVVRLPADSPIPERGDLSCRMHTCFDVYRCGFNPKNKIKVYIYALKKYVDDFGVSVSNTISREYNELLMAISDSDYYTDDINRACLFVPSIDVLNQNTLRIKETAQAMAQLSRWDRGTNHLLFNMLPGGPPDYNTALDVPRDRALLAGGGFSTWTYRQGYDVSIPVYSPLSAEVDLPEKGPGPRQYFLLSSQVGLHPEYREDLEALQVKHGESVLVLDKCTNLSEGVLSVRKRCHKHQVFDYPQVLQEATFCVVLRGARLGQAVLSDVLQAGCVPVVIADSYILPFSEVLDWKRASVVVPEEKMSDVYSILQSIPQRQIEEMQRQARWFWEAYFQSIKAIALATLQIINDRIYPYAAISYEEWNDPPAVKWGSVSNPLFLPLIPPQSQGFTAIVLTYDRVESLFRVITEVSKVPSLSKLLVVWNNQNKNPPEDSLWPKIRVPLKVVRTAENKLSNRFFPYDEIETEAVLAIDDDIIMLTSDELQFGYEVWREFPDRLVGYPGRLHLWDHEMNKWKYESEWTNEVSMVLTGAAFYHKYFNYLYTYKMPGDIKNWVDAHMNCEDIAMNFLVANVTGKAVIKVTPRKKFKCPECTAIDGLSLDQTHMVERSECINKFASVFGTMPLKVVEHRADPVLYKDDFPEKLKSFPNIGSL.

At 1–25 (MCASVKYNIRGPALIPRMKTKHRIY) the chain is on the cytoplasmic side. A helical; Signal-anchor for type II membrane protein transmembrane segment spans residues 26–46 (YITLFSIVLLGLIATGMFQFW). Over 47–718 (PHSIESSNDW…LKSFPNIGSL (672 aa)) the chain is Lumenal. 4 disulfides stabilise this stretch: C85–C90, C96–C151, C286–C300, and C318–C339. N-linked (GlcNAc...) asparagine glycosylation occurs at N288. L461, R465, N490, and N517 together coordinate UDP. UDP-N-acetyl-alpha-D-glucosamine-binding residues include R465, N490, N517, R522, D538, D539, and D540. Residues D538 and D539 each coordinate UDP. D540 lines the Mn(2+) pocket. A protein-binding residues include Y582 and S584. A disulfide bridge connects residues C626 and C676. UDP-N-acetyl-alpha-D-glucosamine is bound by residues E627 and D628. N637 carries an N-linked (GlcNAc...) asparagine glycan. Residues K651 and K653 each coordinate a protein. R673 serves as a coordination point for UDP-N-acetyl-alpha-D-glucosamine.

The protein belongs to the glycosyltransferase 47 family. As to quaternary structure, part of the heparan sulfate polymerase, a dimeric complex composed of EXT1 and EXT2. Could also form homooligomeric complexes. Interacts with NDST1. Interacts with GALNT5. Mn(2+) serves as cofactor. N-glycosylated at Asn-637. Post-translationally, a soluble form is generated by proteolytic processing. In terms of tissue distribution, widely expressed.

Its subcellular location is the golgi apparatus membrane. It localises to the golgi apparatus. The protein localises to the cis-Golgi network membrane. The protein resides in the endoplasmic reticulum membrane. It is found in the secreted. The enzyme catalyses 3-O-{[(1-&gt;4)-beta-D-GlcA-(1-&gt;4)-alpha-D-GlcNAc](n)-(1-&gt;4)-beta-D-GlcA-(1-&gt;3)-beta-D-Gal-(1-&gt;3)-beta-D-Gal-(1-&gt;4)-beta-D-Xyl}-L-seryl-[protein] + UDP-N-acetyl-alpha-D-glucosamine = 3-O-{alpha-D-GlcNAc-[(1-&gt;4)-beta-D-GlcA-(1-&gt;4)-alpha-D-GlcNAc](n)-(1-&gt;4)-beta-D-GlcA-(1-&gt;3)-beta-D-Gal-(1-&gt;3)-beta-D-Gal-(1-&gt;4)-beta-D-Xyl}-L-seryl-[protein] + UDP + H(+). It functions in the pathway protein modification; protein glycosylation. Functionally, glycosyltransferase forming with EXT1 the heterodimeric heparan sulfate polymerase which catalyzes the elongation of the heparan sulfate glycan backbone. Glycan backbone extension consists in the alternating transfer of (1-&gt;4)-beta-D-GlcA and (1-&gt;4)-alpha-D-GlcNAc residues from their respective UDP-sugar donors. Both EXT1 and EXT2 are required for the full activity of the polymerase since EXT1 bears the N-acetylglucosaminyl-proteoglycan 4-beta-glucuronosyltransferase activity within the complex while EXT2 carries the glucuronosyl-N-acetylglucosaminyl-proteoglycan 4-alpha-N-acetylglucosaminyltransferase activity. Heparan sulfate proteoglycans are ubiquitous components of the extracellular matrix and play an important role in tissue homeostasis and signaling. This is Exostosin-2 from Homo sapiens (Human).